A 132-amino-acid polypeptide reads, in one-letter code: L-ectoine synthase (132 aa).

The protein belongs to the ectoine synthase family.

The catalysed reaction is (2S)-4-acetamido-2-aminobutanoate = L-ectoine + H2O. It functions in the pathway amine and polyamine biosynthesis; ectoine biosynthesis; L-ectoine from L-aspartate 4-semialdehyde: step 3/3. In terms of biological role, catalyzes the circularization of gamma-N-acetyl-alpha,gamma-diaminobutyric acid (ADABA) to ectoine (1,4,5,6-tetrahydro-2-methyl-4-pyrimidine carboxylic acid), which is an excellent osmoprotectant. The chain is L-ectoine synthase from Bordetella avium (strain 197N).